Here is a 200-residue protein sequence, read N- to C-terminus: 3-isopropylmalate dehydratase small subunit (200 aa).

The protein belongs to the LeuD family. LeuD type 1 subfamily. Heterodimer of LeuC and LeuD.

It carries out the reaction (2R,3S)-3-isopropylmalate = (2S)-2-isopropylmalate. The protein operates within amino-acid biosynthesis; L-leucine biosynthesis; L-leucine from 3-methyl-2-oxobutanoate: step 2/4. Its function is as follows. Catalyzes the isomerization between 2-isopropylmalate and 3-isopropylmalate, via the formation of 2-isopropylmaleate. The protein is 3-isopropylmalate dehydratase small subunit of Yersinia pseudotuberculosis serotype I (strain IP32953).